The following is a 262-amino-acid chain: Hydroxyethylthiazole kinase (262 aa).

Methionine 50 serves as a coordination point for substrate. Residues arginine 125 and threonine 171 each coordinate ATP. Glycine 198 contacts substrate.

The protein belongs to the Thz kinase family. It depends on Mg(2+) as a cofactor.

The catalysed reaction is 5-(2-hydroxyethyl)-4-methylthiazole + ATP = 4-methyl-5-(2-phosphooxyethyl)-thiazole + ADP + H(+). It functions in the pathway cofactor biosynthesis; thiamine diphosphate biosynthesis; 4-methyl-5-(2-phosphoethyl)-thiazole from 5-(2-hydroxyethyl)-4-methylthiazole: step 1/1. Catalyzes the phosphorylation of the hydroxyl group of 4-methyl-5-beta-hydroxyethylthiazole (THZ). The protein is Hydroxyethylthiazole kinase of Escherichia coli (strain K12 / MC4100 / BW2952).